Here is a 315-residue protein sequence, read N- to C-terminus: Ribosomal protein L11 methyltransferase (315 aa).

S-adenosyl-L-methionine-binding residues include Thr-163, Gly-185, Asp-207, and Asn-249.

This sequence belongs to the methyltransferase superfamily. PrmA family.

It is found in the cytoplasm. It carries out the reaction L-lysyl-[protein] + 3 S-adenosyl-L-methionine = N(6),N(6),N(6)-trimethyl-L-lysyl-[protein] + 3 S-adenosyl-L-homocysteine + 3 H(+). Its function is as follows. Methylates ribosomal protein L11. This chain is Ribosomal protein L11 methyltransferase, found in Lactobacillus helveticus (strain DPC 4571).